A 427-amino-acid chain; its full sequence is WD repeat and SOCS box-containing protein 1 (427 aa).

5 WD repeats span residues 129 to 170, 173 to 213, 217 to 256, 259 to 298, and 314 to 353; these read SRSI…LLLN, DHTD…NMVK, GHPNRVYSSAFSPDSSVLCSVGASKAVLLWNMDKYTLIRK, GHHNDVVSCEFSPDGALLATASYDTRVIVWDHQRGSILLE, and ANDRWVRSVSFCADGRHIASVSDDRLVRFWSIEERAPQAV. In terms of domain architecture, SOCS box spans 379–427; sequence SVHFWECPRSIASLQHLCRMALRRVKTTQQVEALPVPMPLRDFLTYRVV.

In terms of assembly, component of a probable ECS E3 ubiquitin-protein ligase complex that contains the Elongin BC complex.

Its pathway is protein modification; protein ubiquitination. Its function is as follows. Probable substrate-recognition component of a SCF-like ECS (Elongin-Cullin-SOCS-box protein) E3 ubiquitin-protein ligase complex which mediates the ubiquitination and subsequent proteasomal degradation of target proteins. The protein is WD repeat and SOCS box-containing protein 1 (wsb1) of Takifugu rubripes (Japanese pufferfish).